The following is a 361-amino-acid chain: Porphobilinogen deaminase (361 aa).

An N-acetylserine modification is found at S2. S69 bears the Phosphoserine mark. K74 carries the post-translational modification N6-acetyllysine. S147 bears the Phosphoserine mark. An S-(dipyrrolylmethanemethyl)cysteine modification is found at C261.

This sequence belongs to the HMBS family. As to quaternary structure, monomer. Dipyrromethane is required as a cofactor.

It is found in the cytoplasm. The protein localises to the cytosol. The catalysed reaction is 4 porphobilinogen + H2O = hydroxymethylbilane + 4 NH4(+). Its pathway is porphyrin-containing compound metabolism; protoporphyrin-IX biosynthesis; coproporphyrinogen-III from 5-aminolevulinate: step 2/4. In terms of biological role, as part of the heme biosynthetic pathway, catalyzes the sequential polymerization of four molecules of porphobilinogen to form hydroxymethylbilane, also known as preuroporphyrinogen. Catalysis begins with the assembly of the dipyrromethane cofactor by the apoenzyme from two molecules of porphobilinogen or from preuroporphyrinogen. The covalently linked cofactor acts as a primer, around which the tetrapyrrole product is assembled. In the last step of catalysis, the product, preuroporphyrinogen, is released, leaving the cofactor bound to the holodeaminase intact. This Mus musculus (Mouse) protein is Porphobilinogen deaminase (Hmbs).